The sequence spans 286 residues: Bifunctional protein FolD (286 aa).

Residues 165 to 167 (GRS) and S190 contribute to the NADP(+) site.

It belongs to the tetrahydrofolate dehydrogenase/cyclohydrolase family. Homodimer.

It catalyses the reaction (6R)-5,10-methylene-5,6,7,8-tetrahydrofolate + NADP(+) = (6R)-5,10-methenyltetrahydrofolate + NADPH. The enzyme catalyses (6R)-5,10-methenyltetrahydrofolate + H2O = (6R)-10-formyltetrahydrofolate + H(+). Its pathway is one-carbon metabolism; tetrahydrofolate interconversion. Catalyzes the oxidation of 5,10-methylenetetrahydrofolate to 5,10-methenyltetrahydrofolate and then the hydrolysis of 5,10-methenyltetrahydrofolate to 10-formyltetrahydrofolate. The polypeptide is Bifunctional protein FolD (Burkholderia orbicola (strain MC0-3)).